The primary structure comprises 130 residues: T-cell receptor beta chain V region A20.2.25 (130 aa).

An N-terminal signal peptide occupies residues 1 to 21; it reads MSCRLLLYVSLCLVETALMNT. The tract at residues 22–112 is v segment; it reads KITQSPRYLI…DSAVYFCASS (91 aa). 2 N-linked (GlcNAc...) asparagine glycosylation sites follow: Asn-36 and Asn-75. Residues 113-115 are d segment; it reads HGE. A j segment region spans residues 116–130; that stretch reads NTEVFFGKGTTLTVV.

The chain is T-cell receptor beta chain V region A20.2.25 from Mus musculus (Mouse).